Here is a 119-residue protein sequence, read N- to C-terminus: Large ribosomal subunit protein uL18 (119 aa).

The interval 1–20 (MSQIDKASRRQKIKDRSRVK) is disordered. Basic residues predominate over residues 9–20 (RRQKIKDRSRVK).

This sequence belongs to the universal ribosomal protein uL18 family. As to quaternary structure, part of the 50S ribosomal subunit; part of the 5S rRNA/L5/L18/L25 subcomplex. Contacts the 5S and 23S rRNAs.

Its function is as follows. This is one of the proteins that bind and probably mediate the attachment of the 5S RNA into the large ribosomal subunit, where it forms part of the central protuberance. This Chlorobium phaeobacteroides (strain DSM 266 / SMG 266 / 2430) protein is Large ribosomal subunit protein uL18.